A 95-amino-acid polypeptide reads, in one-letter code: UPF0235 protein A2cp1_1215 (95 aa).

The protein belongs to the UPF0235 family.

The chain is UPF0235 protein A2cp1_1215 from Anaeromyxobacter dehalogenans (strain 2CP-1 / ATCC BAA-258).